The sequence spans 346 residues: tRNA N6-adenosine threonylcarbamoyltransferase (346 aa).

A divalent metal cation is bound by residues His-120, His-124, and Tyr-141. Substrate is bound by residues 141 to 145, Asp-173, Gly-188, Glu-192, and Asn-277; that span reads YVSGG. Asp-305 contributes to the a divalent metal cation binding site.

The protein belongs to the KAE1 / TsaD family. Component of the EKC/KEOPS complex composed of at least BUD32, CGI121, GON7, KAE1 and PCC1; the whole complex dimerizes. A divalent metal cation serves as cofactor.

It is found in the cytoplasm. Its subcellular location is the nucleus. The enzyme catalyses L-threonylcarbamoyladenylate + adenosine(37) in tRNA = N(6)-L-threonylcarbamoyladenosine(37) in tRNA + AMP + H(+). In terms of biological role, component of the EKC/KEOPS complex that is required for the formation of a threonylcarbamoyl group on adenosine at position 37 (t(6)A37) in tRNAs that read codons beginning with adenine. The complex is probably involved in the transfer of the threonylcarbamoyl moiety of threonylcarbamoyl-AMP (TC-AMP) to the N6 group of A37. KAE1 likely plays a direct catalytic role in this reaction, but requires other protein(s) of the complex to fulfill this activity. The EKC/KEOPS complex also promotes both telomere uncapping and telomere elongation. The complex is required for efficient recruitment of transcriptional coactivators. This is tRNA N6-adenosine threonylcarbamoyltransferase from Gibberella zeae (strain ATCC MYA-4620 / CBS 123657 / FGSC 9075 / NRRL 31084 / PH-1) (Wheat head blight fungus).